The chain runs to 264 residues: Ribonuclease H (264 aa).

The tract at residues 55–88 is disordered; the sequence is GSRYSSSSGPYRRSTTSYGYSPYSSSSSNYSARH. The segment covering 56 to 85 has biased composition (low complexity); the sequence is SRYSSSSGPYRRSTTSYGYSPYSSSSSNYS. The residue at position 97 (Ser97) is a Phosphoserine. The RNase H type-1 domain maps to 120–263; it reads CSDRQVVYAD…ADMLARRGAS (144 aa). Mg(2+) is bound by residues Asp129, Glu171, Asp191, and Asp255.

It belongs to the RNase H family. Mg(2+) is required as a cofactor.

The enzyme catalyses Endonucleolytic cleavage to 5'-phosphomonoester.. In terms of biological role, endonuclease that specifically degrades the RNA of RNA-DNA hybrids. The polypeptide is Ribonuclease H (rnh1) (Schizosaccharomyces pombe (strain 972 / ATCC 24843) (Fission yeast)).